A 244-amino-acid polypeptide reads, in one-letter code: MSFNLIVDQGNSACKVAFIRNNGIESISFLPGKAGQALSHLVAPHRFDKAIYSSVGLPDEEAEAIVRSCAAASLMMGTETPVPLRLQYDRRTLGADRLAAVVGAHSLYPNTELLVIDAGTAITYERVSAEGIYLGGNISPGLHLRFKALHLFTGRLPLIDPSGISPKIAEYGSSTEEAITAGVIHGLAGEIDRYIDDLHAKEGRSAVILTGGDANYLARIIRSGILIHPDLVLLGLNRILEYNV.

ATP is bound at residue 8–15 (DQGNSACK). Residue 94 to 97 (GADR) participates in substrate binding. The Proton acceptor role is filled by aspartate 96. Position 117 (aspartate 117) interacts with K(+). Threonine 120 provides a ligand contact to ATP. Substrate is bound at residue threonine 175.

The protein belongs to the type III pantothenate kinase family. As to quaternary structure, homodimer. It depends on NH4(+) as a cofactor. K(+) serves as cofactor.

It is found in the cytoplasm. The catalysed reaction is (R)-pantothenate + ATP = (R)-4'-phosphopantothenate + ADP + H(+). Its pathway is cofactor biosynthesis; coenzyme A biosynthesis; CoA from (R)-pantothenate: step 1/5. Catalyzes the phosphorylation of pantothenate (Pan), the first step in CoA biosynthesis. The protein is Type III pantothenate kinase of Porphyromonas gingivalis (strain ATCC 33277 / DSM 20709 / CIP 103683 / JCM 12257 / NCTC 11834 / 2561).